Consider the following 271-residue polypeptide: Phosphatidate cytidylyltransferase (271 aa).

8 consecutive transmembrane segments (helical) span residues 12 to 32 (LLPI…ALFI), 53 to 73 (FGRV…YHLP), 75 to 95 (LAGA…VLVL), 111 to 131 (LGMG…LKQW), 136 to 156 (GLII…YFSG), 174 to 194 (WEGV…VGLY), 199 to 219 (LGAL…SIVG), and 251 to 271 (SLTA…WGAP).

The protein belongs to the CDS family.

It localises to the cell inner membrane. It carries out the reaction a 1,2-diacyl-sn-glycero-3-phosphate + CTP + H(+) = a CDP-1,2-diacyl-sn-glycerol + diphosphate. It functions in the pathway phospholipid metabolism; CDP-diacylglycerol biosynthesis; CDP-diacylglycerol from sn-glycerol 3-phosphate: step 3/3. The chain is Phosphatidate cytidylyltransferase (cdsA) from Pseudomonas aeruginosa (strain ATCC 15692 / DSM 22644 / CIP 104116 / JCM 14847 / LMG 12228 / 1C / PRS 101 / PAO1).